The chain runs to 402 residues: UDP-N-acetylmuramoylalanine--D-glutamate ligase (402 aa).

97–103 (GTNGKTT) lines the ATP pocket.

The protein belongs to the MurCDEF family.

Its subcellular location is the cytoplasm. The enzyme catalyses UDP-N-acetyl-alpha-D-muramoyl-L-alanine + D-glutamate + ATP = UDP-N-acetyl-alpha-D-muramoyl-L-alanyl-D-glutamate + ADP + phosphate + H(+). It participates in cell wall biogenesis; peptidoglycan biosynthesis. Cell wall formation. Catalyzes the addition of glutamate to the nucleotide precursor UDP-N-acetylmuramoyl-L-alanine (UMA). The polypeptide is UDP-N-acetylmuramoylalanine--D-glutamate ligase (Campylobacter jejuni (strain RM1221)).